Consider the following 404-residue polypeptide: NADH-quinone oxidoreductase subunit D 2 (404 aa).

Belongs to the complex I 49 kDa subunit family. NDH-1 is composed of 14 different subunits. Subunits NuoB, C, D, E, F, and G constitute the peripheral sector of the complex.

The protein resides in the cell inner membrane. It catalyses the reaction a quinone + NADH + 5 H(+)(in) = a quinol + NAD(+) + 4 H(+)(out). Its function is as follows. NDH-1 shuttles electrons from NADH, via FMN and iron-sulfur (Fe-S) centers, to quinones in the respiratory chain. The immediate electron acceptor for the enzyme in this species is believed to be ubiquinone. Couples the redox reaction to proton translocation (for every two electrons transferred, four hydrogen ions are translocated across the cytoplasmic membrane), and thus conserves the redox energy in a proton gradient. In Rhizobium meliloti (strain 1021) (Ensifer meliloti), this protein is NADH-quinone oxidoreductase subunit D 2.